The sequence spans 304 residues: RING-H2 finger protein ATL2 (304 aa).

A helical transmembrane segment spans residues 30 to 50 (IMLSAIVILFFVVILMVFLHL). The RING-type; atypical zinc finger occupies 119-161 (CAVCLSEFEESETGRVLPNCQHTFHVDCIDMWFHSHSTCPLCR). Residues 194–304 (EPSSSSGLTD…DIERGGEESR (111 aa)) form a disordered region. A compositionally biased stretch (basic and acidic residues) spans 227 to 244 (VPRRTFSEFEDELTRRDS). The span at 283–293 (PTLSCRIQMTE) shows a compositional bias: polar residues. The segment covering 295 to 304 (DIERGGEESR) has biased composition (basic and acidic residues).

This sequence belongs to the RING-type zinc finger family. ATL subfamily. In terms of tissue distribution, preferentially expressed around the apical meristem region.

Its subcellular location is the membrane. It catalyses the reaction S-ubiquitinyl-[E2 ubiquitin-conjugating enzyme]-L-cysteine + [acceptor protein]-L-lysine = [E2 ubiquitin-conjugating enzyme]-L-cysteine + N(6)-ubiquitinyl-[acceptor protein]-L-lysine.. Its pathway is protein modification; protein ubiquitination. Its function is as follows. May be involved in the early steps of the plant defense signaling pathway. This Arabidopsis thaliana (Mouse-ear cress) protein is RING-H2 finger protein ATL2 (ATL2).